Reading from the N-terminus, the 294-residue chain is Acetylglutamate kinase (294 aa).

Substrate is bound by residues 67–68 (GG), Arg89, and Asn191.

This sequence belongs to the acetylglutamate kinase family. ArgB subfamily.

The protein localises to the cytoplasm. The enzyme catalyses N-acetyl-L-glutamate + ATP = N-acetyl-L-glutamyl 5-phosphate + ADP. It functions in the pathway amino-acid biosynthesis; L-arginine biosynthesis; N(2)-acetyl-L-ornithine from L-glutamate: step 2/4. In terms of biological role, catalyzes the ATP-dependent phosphorylation of N-acetyl-L-glutamate. This is Acetylglutamate kinase from Methylobacillus flagellatus (strain ATCC 51484 / DSM 6875 / VKM B-1610 / KT).